The primary structure comprises 157 residues: MRCPKCGATKSSVIDSRQAEEGNTIRRRRECDECQHRFTTYERVEERTLVVVKKDGTREQFSRDKIFNGIIRSAQKRPVSSDEINMVVNRIEQKLRGRNENEIQSEDIGSLVMEELAELDEITYVRFASVYRSFKDVSELESLLQQITQSSKKKKER.

A disordered region spans residues 1–22 (MRCPKCGATKSSVIDSRQAEEG). Residues 3-34 (CPKCGATKSSVIDSRQAEEGNTIRRRRECDEC) fold into a zinc finger. An ATP-cone domain is found at 49–139 (LVVVKKDGTR…VYRSFKDVSE (91 aa)).

The protein belongs to the NrdR family. Requires Zn(2+) as cofactor.

Functionally, negatively regulates transcription of bacterial ribonucleotide reductase nrd genes and operons by binding to NrdR-boxes. This chain is Transcriptional repressor NrdR, found in Streptococcus pneumoniae (strain Hungary19A-6).